Here is a 158-residue protein sequence, read N- to C-terminus: Putative pre-16S rRNA nuclease (158 aa).

This sequence belongs to the YqgF nuclease family.

The protein localises to the cytoplasm. Functionally, could be a nuclease involved in processing of the 5'-end of pre-16S rRNA. This Paracoccus denitrificans (strain Pd 1222) protein is Putative pre-16S rRNA nuclease.